Reading from the N-terminus, the 206-residue chain is Small ribosomal subunit protein uS4 (206 aa).

The S4 RNA-binding domain occupies 96–156 (TRLDNVVYRM…EKSRTQARIK (61 aa)).

Belongs to the universal ribosomal protein uS4 family. Part of the 30S ribosomal subunit. Contacts protein S5. The interaction surface between S4 and S5 is involved in control of translational fidelity.

Its function is as follows. One of the primary rRNA binding proteins, it binds directly to 16S rRNA where it nucleates assembly of the body of the 30S subunit. In terms of biological role, with S5 and S12 plays an important role in translational accuracy. The polypeptide is Small ribosomal subunit protein uS4 (Shewanella putrefaciens (strain CN-32 / ATCC BAA-453)).